Reading from the N-terminus, the 217-residue chain is Elongation factor Ts (217 aa).

The interval 80 to 83 is involved in Mg(2+) ion dislocation from EF-Tu; it reads TDFV.

Belongs to the EF-Ts family.

The protein resides in the cytoplasm. Functionally, associates with the EF-Tu.GDP complex and induces the exchange of GDP to GTP. It remains bound to the aminoacyl-tRNA.EF-Tu.GTP complex up to the GTP hydrolysis stage on the ribosome. This is Elongation factor Ts from Carboxydothermus hydrogenoformans (strain ATCC BAA-161 / DSM 6008 / Z-2901).